Consider the following 925-residue polypeptide: Probable replication restart protein PriA (925 aa).

8 residues coordinate Zn(2+): Cys645, Cys648, Cys654, Cys657, Cys672, Cys675, Cys685, and Cys688.

It belongs to the helicase family. PriA subfamily. In terms of assembly, interacts with DnaB (DR_0549). Component of the replication restart primosome. It depends on Zn(2+) as a cofactor.

In terms of biological role, initiates the restart of stalled replication forks, which reloads the replicative helicase on sites other than the origin of replication. Recognizes abandoned replication forks and remodels them to uncover a helicase loading site. Promotes assembly of the primosome at these replication forks. Recognizes and binds DNA at stalled replication forks, also binds single-stranded (ss)DNA. This chain is Probable replication restart protein PriA, found in Deinococcus radiodurans (strain ATCC 13939 / DSM 20539 / JCM 16871 / CCUG 27074 / LMG 4051 / NBRC 15346 / NCIMB 9279 / VKM B-1422 / R1).